Reading from the N-terminus, the 336-residue chain is MLPKLVITHRVHDEILQLLAPHCELMTNQTDSTLTREEILRRCRDAQAMMAFMPDRVDADFLQACPELRVVGCALKGFDNFDVDACTARGVWLTFVPDLLTVPTAELAIGLAVGLGRHLRAADAFVRSGEFQGWQPQFYGTGLDNATVGILGMGAIGLAMADRLQGWGATLQYHEAKALDTQTEQRLGLRQVACSELFASSDFILLALPLNADTQHLVNAELLALVRPGALLVNPCRGSVVDEAAVLAALERGQLGGYAADVFEMEDWARADRPRLIDPALLAHPNTLFTPHIGSAVRAVRLEIERCAAQNIIQVLAGARPINAANRLPKAEPAAC.

Residues 155 to 156 (AI), Glu-175, 235 to 237 (PCR), and Asp-261 contribute to the NAD(+) site. Arg-237 is a catalytic residue. Glu-266 is an active-site residue. His-292 serves as the catalytic Proton donor. 292 to 295 (HIGS) contributes to the NAD(+) binding site.

As to quaternary structure, homodimer.

The catalysed reaction is phosphonate + NAD(+) + H2O = phosphate + NADH + H(+). With respect to regulation, inhibited by NaCl, NADH and sulfite. Functionally, catalyzes phosphite (phosphonate) oxidation. This chain is Phosphonate dehydrogenase (ptxD), found in Stutzerimonas stutzeri (Pseudomonas stutzeri).